Reading from the N-terminus, the 178-residue chain is Small ribosomal subunit protein uS4 (178 aa).

The region spanning 104–166 is the S4 RNA-binding domain; that stretch reads RRLQTMVYKK…PNSPMASENH (63 aa). Residues 157 to 178 are disordered; sequence PNSPMASENHPERTAAVSEENQ.

This sequence belongs to the universal ribosomal protein uS4 family. Part of the 30S ribosomal subunit. Contacts protein S5. The interaction surface between S4 and S5 is involved in control of translational fidelity.

One of the primary rRNA binding proteins, it binds directly to 16S rRNA where it nucleates assembly of the body of the 30S subunit. Its function is as follows. With S5 and S12 plays an important role in translational accuracy. This chain is Small ribosomal subunit protein uS4, found in Methanococcus maripaludis (strain C7 / ATCC BAA-1331).